Consider the following 130-residue polypeptide: Small ribosomal subunit protein uS9 (130 aa).

Belongs to the universal ribosomal protein uS9 family.

This is Small ribosomal subunit protein uS9 from Shewanella loihica (strain ATCC BAA-1088 / PV-4).